We begin with the raw amino-acid sequence, 291 residues long: Taste receptor type 2 member 16 (291 aa).

Position 1 (Met-1) is a topological domain, extracellular. Residues 2 to 22 (IPIQLTVFFMIIYVLESLTII) form a helical membrane-spanning segment. Over 23–41 (VQSSLIVAVLGREWLQVRR) the chain is Cytoplasmic. Residues 42–62 (LMPVDMILISLGISRFCLQWA) form a helical membrane-spanning segment. The Extracellular segment spans residues 63 to 84 (SMLNNFCSYFNLNYVLCNLTIT). Asn-80 carries N-linked (GlcNAc...) asparagine glycosylation. A helical transmembrane segment spans residues 85-105 (WEFFNILTFWLNSLLTVFYCI). Residues 106–125 (KVSSFTHHIFLWLRWRILRL) lie on the Cytoplasmic side of the membrane. A helical membrane pass occupies residues 126 to 146 (FPWILLGSLMITCVTIIPSAI). At 147 to 182 (GNYIQIQLLTMEHLPRNSTVTDKLEKFHQYQFQAHT) the chain is on the extracellular side. N-linked (GlcNAc...) asparagine glycosylation is present at Asn-163. The chain crosses the membrane as a helical span at residues 183–203 (VALVIPFILFLASTILLMASL). Over 204–228 (TKQIQHHSTGHCNPSMKAHFTALRS) the chain is Cytoplasmic. Residues 229-249 (LAVLFIVFTSYFLTILITIIG) traverse the membrane as a helical segment. Over 250-257 (TLFDKRCW) the chain is Extracellular. Residues 258 to 278 (LWVWEAFVYAFILMHSTSLML) traverse the membrane as a helical segment. Over 279 to 291 (SSPTLKRILKGKC) the chain is Cytoplasmic.

Belongs to the G-protein coupled receptor T2R family. Interacts with RTP3 and RTP4.

Its subcellular location is the cell membrane. Its function is as follows. Receptor that may play a role in the perception of bitterness and is gustducin-linked. May play a role in sensing the chemical composition of the gastrointestinal content. The activity of this receptor may stimulate alpha gustducin, mediate PLC-beta-2 activation and lead to the gating of TRPM5. The protein is Taste receptor type 2 member 16 (TAS2R16) of Pan troglodytes (Chimpanzee).